Consider the following 1781-residue polypeptide: Chitin synthase 7 (1781 aa).

Asn133, Asn534, Asn629, Asn644, Asn655, and Asn660 each carry an N-linked (GlcNAc...) asparagine glycan. 2 consecutive transmembrane segments (helical) span residues 741–761 (AWVAFVWALTFWIPSPLLKFV) and 777–797 (LVLFFIILLLNGLIIFWIIGF). Residues Asn889 and Asn1011 are each glycosylated (N-linked (GlcNAc...) asparagine). A helical transmembrane segment spans residues 1048–1068 (LLLAFAIIICIVTAVKFLAAL). N-linked (GlcNAc...) asparagine glycosylation is present at Asn1413. 3 helical membrane-spanning segments follow: residues 1444 to 1464 (LTGTIILPSTTVYIGYLIYVL), 1471 to 1491 (IPYISLAMIGAVYGHQALIFI), and 1499 to 1519 (IGWMIIYILAFPIYSFILPLY). A glycan (N-linked (GlcNAc...) asparagine) is linked at Asn1526. The tract at residues 1677-1712 (QANLSPAAGGGHSRSGTALGFSSGSRSPMPDAMRSQ) is disordered. The span at 1690–1702 (RSGTALGFSSGSR) shows a compositional bias: polar residues. A DEK-C domain is found at 1723–1779 (GPTDMAIVESIRSVLCEVDLDTVTKKQVRALVEQRLQTELVGERRTFMDRQIDHELE).

Belongs to the chitin synthase family. Class V subfamily.

The protein resides in the cell membrane. It catalyses the reaction [(1-&gt;4)-N-acetyl-beta-D-glucosaminyl](n) + UDP-N-acetyl-alpha-D-glucosamine = [(1-&gt;4)-N-acetyl-beta-D-glucosaminyl](n+1) + UDP + H(+). Its function is as follows. Polymerizes chitin, a structural polymer of the cell wall and septum, by transferring the sugar moiety of UDP-GlcNAc to the non-reducing end of the growing chitin polymer. Shows additive effects in septum formation with CHS1, CHS2, CHS3A, CHS4, CHS5 and CHS6. Indispensable for perithecia formation and regulates conidiation. Plays an important role in the response to cell wall stress. Also required for hyphal growth and pathogenicity. This is Chitin synthase 7 from Gibberella zeae (strain ATCC MYA-4620 / CBS 123657 / FGSC 9075 / NRRL 31084 / PH-1) (Wheat head blight fungus).